Reading from the N-terminus, the 198-residue chain is Glycerol-3-phosphate acyltransferase (198 aa).

The next 4 helical transmembrane spans lie at 4-24, 71-91, 113-133, and 147-167; these read TYLL…LVVG, LPMI…AVLG, LLCY…TLLF, and VVAV…AMCL.

Belongs to the PlsY family. As to quaternary structure, probably interacts with PlsX.

The protein localises to the cell membrane. The enzyme catalyses an acyl phosphate + sn-glycerol 3-phosphate = a 1-acyl-sn-glycero-3-phosphate + phosphate. It functions in the pathway lipid metabolism; phospholipid metabolism. In terms of biological role, catalyzes the transfer of an acyl group from acyl-phosphate (acyl-PO(4)) to glycerol-3-phosphate (G3P) to form lysophosphatidic acid (LPA). This enzyme utilizes acyl-phosphate as fatty acyl donor, but not acyl-CoA or acyl-ACP. This Bacillus cereus (strain G9842) protein is Glycerol-3-phosphate acyltransferase.